A 307-amino-acid polypeptide reads, in one-letter code: tRNA dimethylallyltransferase 1 (307 aa).

11-18 (GPTASGKT) is a binding site for ATP. Residue 13-18 (TASGKT) participates in substrate binding. Interaction with substrate tRNA regions lie at residues 36–39 (DSRQ) and 159–163 (QRAIR).

The protein belongs to the IPP transferase family. In terms of assembly, monomer. Requires Mg(2+) as cofactor.

The catalysed reaction is adenosine(37) in tRNA + dimethylallyl diphosphate = N(6)-dimethylallyladenosine(37) in tRNA + diphosphate. Functionally, catalyzes the transfer of a dimethylallyl group onto the adenine at position 37 in tRNAs that read codons beginning with uridine, leading to the formation of N6-(dimethylallyl)adenosine (i(6)A). This is tRNA dimethylallyltransferase 1 from Parabacteroides distasonis (strain ATCC 8503 / DSM 20701 / CIP 104284 / JCM 5825 / NCTC 11152).